Consider the following 258-residue polypeptide: Imidazole glycerol phosphate synthase subunit HisF (258 aa).

Catalysis depends on residues aspartate 11 and aspartate 130.

Belongs to the HisA/HisF family. Heterodimer of HisH and HisF.

The protein localises to the cytoplasm. It catalyses the reaction 5-[(5-phospho-1-deoxy-D-ribulos-1-ylimino)methylamino]-1-(5-phospho-beta-D-ribosyl)imidazole-4-carboxamide + L-glutamine = D-erythro-1-(imidazol-4-yl)glycerol 3-phosphate + 5-amino-1-(5-phospho-beta-D-ribosyl)imidazole-4-carboxamide + L-glutamate + H(+). It participates in amino-acid biosynthesis; L-histidine biosynthesis; L-histidine from 5-phospho-alpha-D-ribose 1-diphosphate: step 5/9. In terms of biological role, IGPS catalyzes the conversion of PRFAR and glutamine to IGP, AICAR and glutamate. The HisF subunit catalyzes the cyclization activity that produces IGP and AICAR from PRFAR using the ammonia provided by the HisH subunit. The protein is Imidazole glycerol phosphate synthase subunit HisF of Escherichia coli O127:H6 (strain E2348/69 / EPEC).